Consider the following 277-residue polypeptide: 3-methyl-2-oxobutanoate hydroxymethyltransferase (277 aa).

Positions 53 and 96 each coordinate Mg(2+). Residues 53-54 (DS), Asp96, and Lys126 each bind 3-methyl-2-oxobutanoate. Glu128 is a Mg(2+) binding site. The active-site Proton acceptor is the Glu195.

This sequence belongs to the PanB family. In terms of assembly, homodecamer; pentamer of dimers. Mg(2+) serves as cofactor.

The protein resides in the cytoplasm. It catalyses the reaction 3-methyl-2-oxobutanoate + (6R)-5,10-methylene-5,6,7,8-tetrahydrofolate + H2O = 2-dehydropantoate + (6S)-5,6,7,8-tetrahydrofolate. It functions in the pathway cofactor biosynthesis; (R)-pantothenate biosynthesis; (R)-pantoate from 3-methyl-2-oxobutanoate: step 1/2. Functionally, catalyzes the reversible reaction in which hydroxymethyl group from 5,10-methylenetetrahydrofolate is transferred onto alpha-ketoisovalerate to form ketopantoate. This Chlorobaculum tepidum (strain ATCC 49652 / DSM 12025 / NBRC 103806 / TLS) (Chlorobium tepidum) protein is 3-methyl-2-oxobutanoate hydroxymethyltransferase.